The primary structure comprises 437 residues: Protein farnesyltransferase subunit beta (437 aa).

PFTB repeat units follow at residues 123–164 (ATDV…CIIG), 174–215 (REKL…SLTN), 222–263 (FEGT…VILK), 270–312 (LKSL…PLLH), and 332–374 (QQAL…SIAQ). (2E,6E)-farnesyl diphosphate is bound by residues 248–251 (HGGY) and 291–294 (RCNK). Zn(2+) contacts are provided by Asp297 and Cys299. 300-303 (YSFW) lines the (2E,6E)-farnesyl diphosphate pocket. Residue His362 participates in Zn(2+) binding. Thr436 carries the post-translational modification Phosphothreonine.

This sequence belongs to the protein prenyltransferase subunit beta family. As to quaternary structure, heterodimer of FNTA and FNTB. Zn(2+) is required as a cofactor.

It carries out the reaction L-cysteinyl-[protein] + (2E,6E)-farnesyl diphosphate = S-(2E,6E)-farnesyl-L-cysteinyl-[protein] + diphosphate. Its function is as follows. Essential subunit of the farnesyltransferase complex. Catalyzes the transfer of a farnesyl moiety from farnesyl diphosphate to a cysteine at the fourth position from the C-terminus of several proteins having the C-terminal sequence Cys-aliphatic-aliphatic-X. The chain is Protein farnesyltransferase subunit beta (FNTB) from Bos taurus (Bovine).